The following is an 868-amino-acid chain: Muscle, skeletal receptor tyrosine-protein kinase (868 aa).

The N-terminal stretch at 1-21 (MRELVNIPLLQMLTLVAFSGT) is a signal peptide. At 22-494 (EKLPKAPVIT…FAVSPAYSMT (473 aa)) the chain is on the extracellular side. Ig-like domains lie at 28–116 (PVIT…GALQ), 121–205 (PKIT…KLVK), and 212–302 (ARIL…ATVS). 3 disulfide bridges follow: cysteine 49–cysteine 99, cysteine 98–cysteine 112, and cysteine 142–cysteine 190. Asparagine 222 is a glycosylation site (N-linked (GlcNAc...) asparagine). Cystine bridges form between cysteine 233–cysteine 282, cysteine 317–cysteine 382, cysteine 325–cysteine 375, cysteine 366–cysteine 406, cysteine 394–cysteine 447, and cysteine 398–cysteine 434. The 139-residue stretch at 312-450 (DSQGYCAQYR…HRDPTACTRL (139 aa)) folds into the FZ domain. The N-linked (GlcNAc...) asparagine glycan is linked to asparagine 338. Asparagine 459 carries an N-linked (GlcNAc...) asparagine glycan. The chain crosses the membrane as a helical span at residues 495-515 (VIISIVSSFALFALLTIATLY). The Cytoplasmic portion of the chain corresponds to 516 to 868 (CCRRRKEWKN…CERAEGTVGV (353 aa)). Position 553 is a phosphotyrosine; by autocatalysis (tyrosine 553). In terms of domain architecture, Protein kinase spans 574-855 (IEYVRDIGEG…PSFCSIHRIL (282 aa)). ATP is bound by residues 580–588 (IGEGAFGRV) and lysine 608. A phosphoserine; by CK2 mark is found at serine 680 and serine 697. The Proton acceptor role is filled by aspartate 724. Tyrosine 754 carries the post-translational modification Phosphotyrosine; by autocatalysis.

This sequence belongs to the protein kinase superfamily. Tyr protein kinase family. As to quaternary structure, monomer. Homodimer. Interacts with LRP4; the heterodimer forms an AGRIN receptor complex that binds AGRIN resulting in activation of MUSK. Forms a heterotetramer composed of 2 DOK7 and 2 MUSK molecules which facilitates MUSK trans-autophosphorylation on tyrosine residue and activation. Interacts (via cytoplasmic part) with DOK7 (via IRS-type PTB domain); requires MUSK phosphorylation. Interacts with DVL1 (via DEP domain); the interaction is direct and mediates the formation of a DVL1, MUSK and PAK1 ternary complex involved in AChR clustering. Interacts with PDZRN3; this interaction is enhanced by agrin. Interacts with FNTA; the interaction is direct and mediates AGRIN-induced phosphorylation and activation of FNTA. Interacts with CSNK2B; mediates regulation by CK2. Interacts (via the cytoplasmic domain) with DNAJA3. Interacts with NSF; may regulate MUSK endocytosis and activity. Interacts with CAV3; may regulate MUSK signaling. Interacts with RNF31. Mg(2+) is required as a cofactor. Ubiquitinated by PDZRN3. Ubiquitination promotes endocytosis and lysosomal degradation. In terms of processing, phosphorylated. Phosphorylation is induced by AGRIN. Autophosphorylated. Autophosphorylation at Tyr-553 is required for interaction with DOK7 which in turn stimulates the phosphorylation and the activation of MUSK. Post-translationally, neddylated. As to expression, expressed preferentially in skeletal muscle.

It localises to the postsynaptic cell membrane. It catalyses the reaction L-tyrosyl-[protein] + ATP = O-phospho-L-tyrosyl-[protein] + ADP + H(+). Its activity is regulated as follows. Positively regulated by CK2. In terms of biological role, receptor tyrosine kinase which plays a central role in the formation and the maintenance of the neuromuscular junction (NMJ), the synapse between the motor neuron and the skeletal muscle. Recruitment of AGRIN by LRP4 to the MUSK signaling complex induces phosphorylation and activation of MUSK, the kinase of the complex. The activation of MUSK in myotubes regulates the formation of NMJs through the regulation of different processes including the specific expression of genes in subsynaptic nuclei, the reorganization of the actin cytoskeleton and the clustering of the acetylcholine receptors (AChR) in the postsynaptic membrane. May regulate AChR phosphorylation and clustering through activation of ABL1 and Src family kinases which in turn regulate MUSK. DVL1 and PAK1 that form a ternary complex with MUSK are also important for MUSK-dependent regulation of AChR clustering. May positively regulate Rho family GTPases through FNTA. Mediates the phosphorylation of FNTA which promotes prenylation, recruitment to membranes and activation of RAC1 a regulator of the actin cytoskeleton and of gene expression. Other effectors of the MUSK signaling include DNAJA3 which functions downstream of MUSK. May also play a role within the central nervous system by mediating cholinergic responses, synaptic plasticity and memory formation. The polypeptide is Muscle, skeletal receptor tyrosine-protein kinase (Musk) (Mus musculus (Mouse)).